The sequence spans 475 residues: Ribulose bisphosphate carboxylase large chain (475 aa).

The propeptide occupies M1 to S2. P3 bears the N-acetylproline mark. K14 carries the post-translational modification N6,N6,N6-trimethyllysine. Residues N123 and T173 each coordinate substrate. Residue K175 is the Proton acceptor of the active site. K177 is a substrate binding site. Mg(2+) contacts are provided by K201, D203, and E204. K201 carries the N6-carboxylysine modification. Residue H294 is the Proton acceptor of the active site. Substrate is bound by residues R295, H327, and S379.

It belongs to the RuBisCO large chain family. Type I subfamily. As to quaternary structure, heterohexadecamer of 8 large chains and 8 small chains; disulfide-linked. The disulfide link is formed within the large subunit homodimers. The cofactor is Mg(2+). Post-translationally, the disulfide bond which can form in the large chain dimeric partners within the hexadecamer appears to be associated with oxidative stress and protein turnover.

It is found in the plastid. It localises to the chloroplast. It catalyses the reaction 2 (2R)-3-phosphoglycerate + 2 H(+) = D-ribulose 1,5-bisphosphate + CO2 + H2O. It carries out the reaction D-ribulose 1,5-bisphosphate + O2 = 2-phosphoglycolate + (2R)-3-phosphoglycerate + 2 H(+). In terms of biological role, ruBisCO catalyzes two reactions: the carboxylation of D-ribulose 1,5-bisphosphate, the primary event in carbon dioxide fixation, as well as the oxidative fragmentation of the pentose substrate in the photorespiration process. Both reactions occur simultaneously and in competition at the same active site. This is Ribulose bisphosphate carboxylase large chain from Pinus koraiensis (Korean pine).